The sequence spans 127 residues: Protein KRTCAP2 homolog (127 aa).

4 consecutive transmembrane segments (helical) span residues 13–33 (LISLILWVIIFALLNIGSNFF), 41–61 (ILGGFVGSFLFFLQMTFIGAI), 65–85 (VKLLETVLAVIITAMISSSVH), and 87–107 (VSGTTSIIFSIGWIFYLNHAS).

The protein belongs to the KRTCAP2 family. As to quaternary structure, component of the oligosaccharyltransferase (OST) complex.

The protein localises to the membrane. Its function is as follows. Subunit of the oligosaccharyl transferase (OST) complex that catalyzes the initial transfer of a defined glycan (Glc(3)Man(9)GlcNAc(2) in eukaryotes) from the lipid carrier dolichol-pyrophosphate to an asparagine residue within an Asn-X-Ser/Thr consensus motif in nascent polypeptide chains, the first step in protein N-glycosylation. N-glycosylation occurs cotranslationally and the complex associates with the Sec61 complex at the channel-forming translocon complex that mediates protein translocation across the endoplasmic reticulum (ER). All subunits are required for a maximal enzyme activity. This is Protein KRTCAP2 homolog from Dictyostelium discoideum (Social amoeba).